The sequence spans 559 residues: Sulfite reductase [NADPH] hemoprotein beta-component (559 aa).

4 residues coordinate [4Fe-4S] cluster: cysteine 423, cysteine 429, cysteine 468, and cysteine 472. Cysteine 472 is a binding site for siroheme.

It belongs to the nitrite and sulfite reductase 4Fe-4S domain family. Alpha(8)-beta(8). The alpha component is a flavoprotein, the beta component is a hemoprotein. Siroheme serves as cofactor. Requires [4Fe-4S] cluster as cofactor.

It catalyses the reaction hydrogen sulfide + 3 NADP(+) + 3 H2O = sulfite + 3 NADPH + 4 H(+). It functions in the pathway sulfur metabolism; hydrogen sulfide biosynthesis; hydrogen sulfide from sulfite (NADPH route): step 1/1. In terms of biological role, component of the sulfite reductase complex that catalyzes the 6-electron reduction of sulfite to sulfide. This is one of several activities required for the biosynthesis of L-cysteine from sulfate. This chain is Sulfite reductase [NADPH] hemoprotein beta-component, found in Thiocapsa roseopersicina.